Reading from the N-terminus, the 289-residue chain is ATP synthase gamma chain (289 aa).

This sequence belongs to the ATPase gamma chain family. F-type ATPases have 2 components, CF(1) - the catalytic core - and CF(0) - the membrane proton channel. CF(1) has five subunits: alpha(3), beta(3), gamma(1), delta(1), epsilon(1). CF(0) has three main subunits: a, b and c.

The protein localises to the cell membrane. Functionally, produces ATP from ADP in the presence of a proton gradient across the membrane. The gamma chain is believed to be important in regulating ATPase activity and the flow of protons through the CF(0) complex. This Lactococcus lactis subsp. cremoris (strain MG1363) protein is ATP synthase gamma chain.